We begin with the raw amino-acid sequence, 194 residues long: Imidazoleglycerol-phosphate dehydratase (194 aa).

It belongs to the imidazoleglycerol-phosphate dehydratase family.

The protein resides in the cytoplasm. The enzyme catalyses D-erythro-1-(imidazol-4-yl)glycerol 3-phosphate = 3-(imidazol-4-yl)-2-oxopropyl phosphate + H2O. The protein operates within amino-acid biosynthesis; L-histidine biosynthesis; L-histidine from 5-phospho-alpha-D-ribose 1-diphosphate: step 6/9. In Chlorobaculum tepidum (strain ATCC 49652 / DSM 12025 / NBRC 103806 / TLS) (Chlorobium tepidum), this protein is Imidazoleglycerol-phosphate dehydratase.